The following is a 310-amino-acid chain: tRNA pseudouridine synthase B (310 aa).

The active-site Nucleophile is aspartate 49.

The protein belongs to the pseudouridine synthase TruB family. Type 1 subfamily.

The catalysed reaction is uridine(55) in tRNA = pseudouridine(55) in tRNA. Responsible for synthesis of pseudouridine from uracil-55 in the psi GC loop of transfer RNAs. This Idiomarina loihiensis (strain ATCC BAA-735 / DSM 15497 / L2-TR) protein is tRNA pseudouridine synthase B.